The chain runs to 178 residues: Ribosome maturation factor RimP (178 aa).

This sequence belongs to the RimP family.

The protein resides in the cytoplasm. Required for maturation of 30S ribosomal subunits. The sequence is that of Ribosome maturation factor RimP from Cutibacterium acnes (strain DSM 16379 / KPA171202) (Propionibacterium acnes).